Reading from the N-terminus, the 622-residue chain is Putative E3 ubiquitin-protein ligase ORTHRUS 4 (622 aa).

The PHD-type zinc finger occupies 12–62 (DGVCMRCQVTPPSEETLTCGTCVTPWHVSCLLPESLASSTGDWECPDCSGV). The RING-type 1 zinc-finger motif lies at 129–169 (CSICIQLPERPVTTPCGHNFCLKCFEKWAVGQGKLTCMICR). The YDG domain maps to 258–407 (TRNQGVLVGE…HKMCRYLFVR (150 aa)). An RING-type 2 zinc finger spans residues 498 to 555 (CQICRKVLSLPVTTPCAHNFCKACLEAKFAGITQLRDRSNGVRKLRAKKNIMTCPCCT). Residues 566 to 602 (QVNREMMEIIENFKKSEEEAEVAESSNISEEEEEESE) adopt a coiled-coil conformation. The tract at residues 579 to 622 (KKSEEEAEVAESSNISEEEEEESEPPTKKIKMDNNSVGDTSLSA) is disordered. A compositionally biased stretch (polar residues) spans 611–622 (DNNSVGDTSLSA).

It localises to the nucleus. It carries out the reaction S-ubiquitinyl-[E2 ubiquitin-conjugating enzyme]-L-cysteine + [acceptor protein]-L-lysine = [E2 ubiquitin-conjugating enzyme]-L-cysteine + N(6)-ubiquitinyl-[acceptor protein]-L-lysine.. It participates in protein modification; protein ubiquitination. Its function is as follows. E3 ubiquitin-protein ligase. May participate in CpG methylation-dependent transcriptional regulation. This is Putative E3 ubiquitin-protein ligase ORTHRUS 4 (ORTH4) from Arabidopsis thaliana (Mouse-ear cress).